The primary structure comprises 196 residues: O-methyltransferase dpmpI (196 aa).

S-adenosyl-L-methionine-binding positions include 127-128 (GG), D152, and 174-175 (SF). Positions 166 to 196 (NGIEAVPHSFEDPQPIKSKSPRLDNLARERL) are disordered. Residues 186–196 (PRLDNLARERL) are compositionally biased toward basic and acidic residues.

It belongs to the class I-like SAM-binding methyltransferase superfamily. Cation-independent O-methyltransferase family.

Its pathway is secondary metabolite biosynthesis; terpenoid biosynthesis. In terms of biological role, O-methyltransferase; part of the gene cluster that mediates the biosynthesis of diterpenoid pyrones. The first step of the pathway is the synthesis of the alpha-pyrone moiety by the polyketide synthase dpmpA via condensation of one acetyl-CoA starter unit with 3 malonyl-CoA units and 2 methylations. The alpha-pyrone is then combined with geranylgeranyl pyrophosphate (GGPP) formed by the GGPP synthase dpmpD through the action of the prenyltransferase dpmpC to yield a linear alpha-pyrone diterpenoid. Subsequent steps in the diterpenoid pyrone biosynthetic pathway involve the decalin core formation, which is initiated by the epoxidation of the C10-C11 olefin by the FAD-dependent oxidoreductase dpmpE, and is followed by a cyclization cascade catalyzed by the terpene cyclase dpmpB. The short chain dehydrogenase/reductase dpmpG then oxidizes the 8S hydroxy group to a ketone and the short chain dehydrogenase/reductase dpmpH reduces the ketone to the 8R hydroxy group to yield higginsianin B. Higginsianin B is further methylated by the methyltransferase dpmpI to produce the intermediate named FDDP B. The cytochrome P450 monooxygenase dpmpJ then oxidizes the C-26 methyl to primary alcohol, producing the final diterpenoid pyrone with a C-26 primary alcohol on the gamma-pyrone moiety named FDDP C. The sequence is that of O-methyltransferase dpmpI from Macrophomina phaseolina (strain MS6) (Charcoal rot fungus).